Consider the following 377-residue polypeptide: Lactosylceramide 1,3-N-acetyl-beta-D-glucosaminyltransferase (377 aa).

The Cytoplasmic portion of the chain corresponds to 1-14 (MRVFVSSRRVKRWQ). Residues 15 to 35 (FFHLFAICFILSFMVFWGPIN) traverse the membrane as a helical; Signal-anchor for type II membrane protein segment. Residues 36 to 377 (NYIMSHMKSY…NSYPCRAAFA (342 aa)) are Lumenal-facing. Asn58 carries an N-linked (GlcNAc...) asparagine glycan.

The protein belongs to the glycosyltransferase 31 family.

The protein localises to the golgi apparatus membrane. It carries out the reaction a beta-D-Gal-(1-&gt;4)-beta-D-Glc-(1&lt;-&gt;1)-Cer(d18:1(4E)) + UDP-N-acetyl-alpha-D-glucosamine = a beta-D-GlcNAc-(1-&gt;3)-beta-D-Gal-(1-&gt;4)-beta-D-Glc-(1&lt;-&gt;1)-Cer(d18:1(4E)) + UDP + H(+). It catalyses the reaction a neolactoside nLc4Cer(d18:1(4E)) + UDP-N-acetyl-alpha-D-glucosamine = a neolactoside IV(3)-beta-GlcNAc-nLc4Cer(d18:1(4E)) + UDP + H(+). Its pathway is protein modification; protein glycosylation. Functionally, beta-1,3-N-acetylglucosaminyltransferase that plays a key role in the synthesis of lacto- or neolacto-series carbohydrate chains on glycolipids, notably by participating in biosynthesis of HNK-1 and Lewis X carbohydrate structures. Has strong activity toward lactosylceramide (LacCer) and neolactotetraosylceramide (nLc(4)Cer; paragloboside), resulting in the synthesis of Lc(3)Cer and neolactopentaosylceramide (nLc(5)Cer), respectively. Probably plays a central role in regulating neolacto-series glycolipid synthesis during embryonic development. The chain is Lactosylceramide 1,3-N-acetyl-beta-D-glucosaminyltransferase from Rattus norvegicus (Rat).